Here is a 1411-residue protein sequence, read N- to C-terminus: DNA-directed RNA polymerase subunit beta' (1411 aa).

Zn(2+) is bound by residues Cys-70, Cys-72, Cys-85, and Cys-88. Mg(2+)-binding residues include Asp-458, Asp-460, and Asp-462. The Zn(2+) site is built by Cys-813, Cys-887, Cys-894, and Cys-897. Residues 1391-1411 are disordered; the sequence is AQAEVPELDGSSVTASDAAAD.

Belongs to the RNA polymerase beta' chain family. In terms of assembly, the RNAP catalytic core consists of 2 alpha, 1 beta, 1 beta' and 1 omega subunit. When a sigma factor is associated with the core the holoenzyme is formed, which can initiate transcription. Mg(2+) serves as cofactor. The cofactor is Zn(2+).

It carries out the reaction RNA(n) + a ribonucleoside 5'-triphosphate = RNA(n+1) + diphosphate. DNA-dependent RNA polymerase catalyzes the transcription of DNA into RNA using the four ribonucleoside triphosphates as substrates. The protein is DNA-directed RNA polymerase subunit beta' of Verminephrobacter eiseniae (strain EF01-2).